Reading from the N-terminus, the 326-residue chain is DNA-directed RNA polymerase subunit alpha (326 aa).

The interval 1-231 (MQSNALLKPR…DQLSVFADLE (231 aa)) is alpha N-terminal domain (alpha-NTD). The alpha C-terminal domain (alpha-CTD) stretch occupies residues 245–326 (IDPVLLRPVD…WPPAGLEKLG (82 aa)).

It belongs to the RNA polymerase alpha chain family. As to quaternary structure, homodimer. The RNAP catalytic core consists of 2 alpha, 1 beta, 1 beta' and 1 omega subunit. When a sigma factor is associated with the core the holoenzyme is formed, which can initiate transcription.

The enzyme catalyses RNA(n) + a ribonucleoside 5'-triphosphate = RNA(n+1) + diphosphate. Its function is as follows. DNA-dependent RNA polymerase catalyzes the transcription of DNA into RNA using the four ribonucleoside triphosphates as substrates. The chain is DNA-directed RNA polymerase subunit alpha from Azoarcus sp. (strain BH72).